Here is a 246-residue protein sequence, read N- to C-terminus: Pyridoxine 5'-phosphate synthase (246 aa).

Residue asparagine 12 participates in 3-amino-2-oxopropyl phosphate binding. Residue 14–15 (DH) coordinates 1-deoxy-D-xylulose 5-phosphate. Residue arginine 23 participates in 3-amino-2-oxopropyl phosphate binding. Histidine 48 (proton acceptor) is an active-site residue. Residues arginine 50 and histidine 55 each coordinate 1-deoxy-D-xylulose 5-phosphate. The Proton acceptor role is filled by glutamate 75. Position 105 (threonine 105) interacts with 1-deoxy-D-xylulose 5-phosphate. Residue histidine 196 is the Proton donor of the active site. 3-amino-2-oxopropyl phosphate contacts are provided by residues glycine 197 and 218-219 (GH).

This sequence belongs to the PNP synthase family. As to quaternary structure, homooctamer; tetramer of dimers.

It localises to the cytoplasm. It catalyses the reaction 3-amino-2-oxopropyl phosphate + 1-deoxy-D-xylulose 5-phosphate = pyridoxine 5'-phosphate + phosphate + 2 H2O + H(+). It participates in cofactor biosynthesis; pyridoxine 5'-phosphate biosynthesis; pyridoxine 5'-phosphate from D-erythrose 4-phosphate: step 5/5. Functionally, catalyzes the complicated ring closure reaction between the two acyclic compounds 1-deoxy-D-xylulose-5-phosphate (DXP) and 3-amino-2-oxopropyl phosphate (1-amino-acetone-3-phosphate or AAP) to form pyridoxine 5'-phosphate (PNP) and inorganic phosphate. The polypeptide is Pyridoxine 5'-phosphate synthase (Pseudomonas putida (strain ATCC 47054 / DSM 6125 / CFBP 8728 / NCIMB 11950 / KT2440)).